Here is a 328-residue protein sequence, read N- to C-terminus: Methionyl-tRNA formyltransferase (328 aa).

Residue 121–124 coordinates (6S)-5,6,7,8-tetrahydrofolate; that stretch reads SLLP.

This sequence belongs to the Fmt family.

It catalyses the reaction L-methionyl-tRNA(fMet) + (6R)-10-formyltetrahydrofolate = N-formyl-L-methionyl-tRNA(fMet) + (6S)-5,6,7,8-tetrahydrofolate + H(+). Functionally, attaches a formyl group to the free amino group of methionyl-tRNA(fMet). The formyl group appears to play a dual role in the initiator identity of N-formylmethionyl-tRNA by promoting its recognition by IF2 and preventing the misappropriation of this tRNA by the elongation apparatus. This chain is Methionyl-tRNA formyltransferase, found in Burkholderia thailandensis (strain ATCC 700388 / DSM 13276 / CCUG 48851 / CIP 106301 / E264).